A 248-amino-acid polypeptide reads, in one-letter code: tRNA pseudouridine synthase A (248 aa).

Asp52 functions as the Nucleophile in the catalytic mechanism. Position 113 (Tyr113) interacts with substrate.

The protein belongs to the tRNA pseudouridine synthase TruA family. Homodimer.

The catalysed reaction is uridine(38/39/40) in tRNA = pseudouridine(38/39/40) in tRNA. Formation of pseudouridine at positions 38, 39 and 40 in the anticodon stem and loop of transfer RNAs. The protein is tRNA pseudouridine synthase A of Mesorhizobium japonicum (strain LMG 29417 / CECT 9101 / MAFF 303099) (Mesorhizobium loti (strain MAFF 303099)).